The sequence spans 130 residues: S-protein homolog 22 (130 aa).

Positions 1–21 (MKYFTIFFIFFSLCMFGHVSG) are cleaved as a signal peptide.

The protein belongs to the plant self-incompatibility (S1) protein family.

The protein localises to the secreted. The sequence is that of S-protein homolog 22 from Arabidopsis thaliana (Mouse-ear cress).